A 97-amino-acid polypeptide reads, in one-letter code: Acylphosphatase-2 (97 aa).

An N-acetylalanine modification is found at Ala-2. Residues 7–97 (SVDYEVFGTV…LEYSNFSIRY (91 aa)) form the Acylphosphatase-like domain. Active-site residues include Arg-22 and Asn-40. Ser-91 is modified (phosphoserine).

Belongs to the acylphosphatase family.

The enzyme catalyses an acyl phosphate + H2O = a carboxylate + phosphate + H(+). In terms of biological role, its physiological role is not yet clear. The sequence is that of Acylphosphatase-2 (Acyp2) from Rattus norvegicus (Rat).